We begin with the raw amino-acid sequence, 37 residues long: MKVRASVRKICEKCRVIKRRGRVMVICANPKHKQRQG.

The protein belongs to the bacterial ribosomal protein bL36 family.

This Synechococcus elongatus (strain ATCC 33912 / PCC 7942 / FACHB-805) (Anacystis nidulans R2) protein is Large ribosomal subunit protein bL36.